The sequence spans 253 residues: Large ribosomal subunit protein uL1m (253 aa).

The transit peptide at Met-1–Ala-81 directs the protein to the mitochondrion.

It belongs to the universal ribosomal protein uL1 family. Component of the mitochondrial large ribosomal subunit (mt-LSU). Mature yeast 74S mitochondrial ribosomes consist of a small (37S) and a large (54S) subunit. The 37S small subunit contains a 15S ribosomal RNA (15S mt-rRNA) and at least 32 different proteins. The 54S large subunit contains a 21S rRNA (21S mt-rRNA) and at least 45 different proteins.

It is found in the mitochondrion. Component of the mitochondrial ribosome (mitoribosome), a dedicated translation machinery responsible for the synthesis of mitochondrial genome-encoded proteins, including at least some of the essential transmembrane subunits of the mitochondrial respiratory chain. The mitoribosomes are attached to the mitochondrial inner membrane and translation products are cotranslationally integrated into the membrane. This is Large ribosomal subunit protein uL1m (mrpl1) from Schizosaccharomyces pombe (strain 972 / ATCC 24843) (Fission yeast).